The following is a 231-amino-acid chain: Monothiol glutaredoxin-6 (231 aa).

The N-terminal stretch at 1–29 is a signal peptide; it reads MIPSNKRNARILSITTLLLLLVFFVAQNA. One can recognise a Glutaredoxin domain in the interval 116 to 219; the sequence is QKEYSLILDL…ESLQVWSDGK (104 aa). Cys136 serves as a coordination point for [2Fe-2S] cluster.

It belongs to the glutaredoxin family. Monothiol subfamily.

Its subcellular location is the vacuole. The chain is Monothiol glutaredoxin-6 (GRX6) from Saccharomyces cerevisiae (strain ATCC 204508 / S288c) (Baker's yeast).